The sequence spans 102 residues: Antitoxin VapB46 (102 aa).

Belongs to the phD/YefM antitoxin family.

Antitoxin component of a type II toxin-antitoxin (TA) system. Neutralizes the effect of cognate toxin VapC46. This is Antitoxin VapB46 (vapB46) from Mycobacterium tuberculosis (strain CDC 1551 / Oshkosh).